Here is a 570-residue protein sequence, read N- to C-terminus: E3 ubiquitin-protein ligase ZFP91 (570 aa).

Residues 1–12 (MPGETEEPRPPE) are compositionally biased toward basic and acidic residues. The disordered stretch occupies residues 1-306 (MPGETEEPRP…PRLPKRRKKP (306 aa)). Composition is skewed to low complexity over residues 31-43 (QRPP…APAG) and 59-68 (AAAAAAAAAV). The segment covering 69–82 (SRRRKAEYPRRRRS) has biased composition (basic residues). A phosphoserine mark is found at Ser-83 and Ser-103. A compositionally biased stretch (polar residues) spans 94–104 (QQPQAAKSPSP). A compositionally biased stretch (basic and acidic residues) spans 119-128 (VTTDKDPKEE). A compositionally biased stretch (acidic residues) spans 207-223 (SEEEEEEEEEMLISEEE). Composition is skewed to basic and acidic residues over residues 224-245 (IPFK…ETPK) and 252-269 (KVKE…VEVE). Residues 270–282 (VKEEENEIREDEE) are compositionally biased toward acidic residues. 5 consecutive C2H2-type zinc fingers follow at residues 311–336 (VRCE…KYQH), 342–366 (YVCP…AKHH), 372–394 (YICE…RMIH), 400–422 (LQCE…MKKH), and 430–453 (FSCN…AKSH). The tract at residues 338 to 368 (LKKKYVCPHPSCGRLFRLQKQLLRHAKHHTD) is interaction with MAP3K14/NIK.

The protein belongs to the krueppel C2H2-type zinc-finger protein family. In terms of assembly, interacts with MAP3K14/NIK. Expressed ubiquitously, particularly at high level in testis. Isoform 2 is testis specific.

Its subcellular location is the nucleus. The catalysed reaction is S-ubiquitinyl-[E2 ubiquitin-conjugating enzyme]-L-cysteine + [acceptor protein]-L-lysine = [E2 ubiquitin-conjugating enzyme]-L-cysteine + N(6)-ubiquitinyl-[acceptor protein]-L-lysine.. Its pathway is protein modification; protein ubiquitination. Atypical E3 ubiquitin-protein ligase that mediates 'Lys-63'-linked ubiquitination of MAP3K14/NIK, leading to stabilize and activate MAP3K14/NIK. It thereby acts as an activator of the non-canonical NF-kappa-B2/NFKB2 pathway. May also play an important role in cell proliferation and/or anti-apoptosis. The chain is E3 ubiquitin-protein ligase ZFP91 (ZFP91) from Homo sapiens (Human).